The primary structure comprises 156 residues: Ribosome maturation factor RimP (156 aa).

Belongs to the RimP family.

It is found in the cytoplasm. Its function is as follows. Required for maturation of 30S ribosomal subunits. The sequence is that of Ribosome maturation factor RimP from Bacillus velezensis (strain DSM 23117 / BGSC 10A6 / LMG 26770 / FZB42) (Bacillus amyloliquefaciens subsp. plantarum).